The chain runs to 635 residues: MTILRHPLRFLFKPRFLYFQSPSGQSSRPFSTSQILRTALDMPPPPVDTTQRLAKLRELMAQNKVDVYTFISSFTGSAGCAIVSMSKAALSTDGRYFSQAAKQLDSNWTLLKRGVEGVPTWEEWTAEQAENGKVVGVDPSLITAADARKLSQTLKTTGGSLIGIDQNLIDAVWGDERPARPSNQITVQPVERAGKSFEEKVEDLRKELAAKKRSAMVISTLDEIAWLFNLRGSDIPYNPVFFSYAIVTPSVAELYVDENKLSPEARKHLEGKVVLKPYESIFQASKALAESKASASSGSGGKFLLSNKASWSVSLALGGEQNVVEVRSPITDAKAIKNEVELEGFRKCHIRDGAALIEYFAWLENALIKEGAKLDEVDGANKLFEIRKKYDHFVGNSFDTISSTGANGATIHYKPEKSTCAVIDPKAMYLCDSGGQYLDGTTDTTRTLHFGEPTEFQKKAYALVLKGHISIDNAIFPKGTTGYAIDSFARQHLWKEGLDYLHGTGHGVGSFLNVHEGPMGIGSRAQYAEVPLSASNVLSNEPGYYEDGNFGIRLENLVICKEVKTPHKFGDKPFLGFEYITLVPFCQKLLDASLLTEAERKWVNDYHAKVWEKTSPFFEKDELTTNWLKRETQPI.

The Mn(2+) site is built by D432, D443, E541, and E555.

The protein belongs to the peptidase M24B family. Requires Mn(2+) as cofactor.

It carries out the reaction Release of any N-terminal amino acid, including proline, that is linked to proline, even from a dipeptide or tripeptide.. Functionally, catalyzes the removal of a penultimate prolyl residue from the N-termini of peptides. The protein is Probable Xaa-Pro aminopeptidase P (AMPP) of Arthroderma gypseum (strain ATCC MYA-4604 / CBS 118893) (Microsporum gypseum).